Here is a 367-residue protein sequence, read N- to C-terminus: NAD(P)H-quinone oxidoreductase subunit 1, chloroplastic (367 aa).

The next 7 membrane-spanning stretches (helical) occupy residues 30-50 (LFPI…IVWL), 98-118 (FSIG…VIPF), 127-147 (LSIG…GLLM), 164-184 (AAAQ…SISL), 273-293 (LFVT…IFVP), 304-324 (VFGT…FLFI), and 340-360 (LLNL…LLTT).

Belongs to the complex I subunit 1 family. As to quaternary structure, NDH is composed of at least 16 different subunits, 5 of which are encoded in the nucleus.

It is found in the plastid. It localises to the chloroplast thylakoid membrane. It carries out the reaction a plastoquinone + NADH + (n+1) H(+)(in) = a plastoquinol + NAD(+) + n H(+)(out). The catalysed reaction is a plastoquinone + NADPH + (n+1) H(+)(in) = a plastoquinol + NADP(+) + n H(+)(out). In terms of biological role, NDH shuttles electrons from NAD(P)H:plastoquinone, via FMN and iron-sulfur (Fe-S) centers, to quinones in the photosynthetic chain and possibly in a chloroplast respiratory chain. The immediate electron acceptor for the enzyme in this species is believed to be plastoquinone. Couples the redox reaction to proton translocation, and thus conserves the redox energy in a proton gradient. This Nicotiana tabacum (Common tobacco) protein is NAD(P)H-quinone oxidoreductase subunit 1, chloroplastic.